A 157-amino-acid polypeptide reads, in one-letter code: Endoribonuclease YbeY (157 aa).

Zn(2+) is bound by residues His-123, His-127, and His-133.

This sequence belongs to the endoribonuclease YbeY family. Zn(2+) serves as cofactor.

The protein resides in the cytoplasm. Its function is as follows. Single strand-specific metallo-endoribonuclease involved in late-stage 70S ribosome quality control and in maturation of the 3' terminus of the 16S rRNA. This is Endoribonuclease YbeY from Limosilactobacillus fermentum (strain NBRC 3956 / LMG 18251) (Lactobacillus fermentum).